Reading from the N-terminus, the 92-residue chain is MGLHYEHQVHLLKDILTDHQLDCCGTVAEYEQLERVIKSLMANTELDSNFKNVLEDVYRYSQSGISSKSIDSHIQEHQNSLSQWVEQMDSYS.

This is an uncharacterized protein from Bacillus subtilis (strain 168).